The sequence spans 360 residues: Holliday junction branch migration complex subunit RuvB (360 aa).

Positions 1–46 (MAIKRSGNSDRPAKNPSSTPGTNAPTLLSPTPTHQEKETSEEKIRP) are disordered. Residues 13–205 (AKNPSSTPGT…FGLIQRLRFY (193 aa)) are large ATPase domain (RuvB-L). Polar residues predominate over residues 15–33 (NPSSTPGTNAPTLLSPTPT). A compositionally biased stretch (basic and acidic residues) spans 34–46 (HQEKETSEEKIRP). ATP contacts are provided by residues isoleucine 44, arginine 45, glycine 86, lysine 89, threonine 90, threonine 91, 152–154 (EDY), arginine 195, tyrosine 205, and arginine 242. Position 90 (threonine 90) interacts with Mg(2+). Residues 206–276 (EVDELTLIVL…LASEALDIYQ (71 aa)) are small ATPAse domain (RuvB-S). Residues 279-360 (KQGLDWIDRL…LTSEEQLSIF (82 aa)) form a head domain (RuvB-H) region. The DNA site is built by arginine 334 and arginine 339.

This sequence belongs to the RuvB family. As to quaternary structure, homohexamer. Forms an RuvA(8)-RuvB(12)-Holliday junction (HJ) complex. HJ DNA is sandwiched between 2 RuvA tetramers; dsDNA enters through RuvA and exits via RuvB. An RuvB hexamer assembles on each DNA strand where it exits the tetramer. Each RuvB hexamer is contacted by two RuvA subunits (via domain III) on 2 adjacent RuvB subunits; this complex drives branch migration. In the full resolvosome a probable DNA-RuvA(4)-RuvB(12)-RuvC(2) complex forms which resolves the HJ.

It is found in the cytoplasm. It carries out the reaction ATP + H2O = ADP + phosphate + H(+). In terms of biological role, the RuvA-RuvB-RuvC complex processes Holliday junction (HJ) DNA during genetic recombination and DNA repair, while the RuvA-RuvB complex plays an important role in the rescue of blocked DNA replication forks via replication fork reversal (RFR). RuvA specifically binds to HJ cruciform DNA, conferring on it an open structure. The RuvB hexamer acts as an ATP-dependent pump, pulling dsDNA into and through the RuvAB complex. RuvB forms 2 homohexamers on either side of HJ DNA bound by 1 or 2 RuvA tetramers; 4 subunits per hexamer contact DNA at a time. Coordinated motions by a converter formed by DNA-disengaged RuvB subunits stimulates ATP hydrolysis and nucleotide exchange. Immobilization of the converter enables RuvB to convert the ATP-contained energy into a lever motion, pulling 2 nucleotides of DNA out of the RuvA tetramer per ATP hydrolyzed, thus driving DNA branch migration. The RuvB motors rotate together with the DNA substrate, which together with the progressing nucleotide cycle form the mechanistic basis for DNA recombination by continuous HJ branch migration. Branch migration allows RuvC to scan DNA until it finds its consensus sequence, where it cleaves and resolves cruciform DNA. This Rippkaea orientalis (strain PCC 8801 / RF-1) (Cyanothece sp. (strain PCC 8801)) protein is Holliday junction branch migration complex subunit RuvB.